We begin with the raw amino-acid sequence, 447 residues long: Putative branched-chain amino acid carrier protein SH1502 (447 aa).

13 helical membrane-spanning segments follow: residues 6-26 (WIVG…IFPP), 40-60 (VIAF…VGAL), 74-94 (PKFS…LFAI), 116-136 (LVLF…CINP), 143-163 (IGSL…IKGF), 193-213 (GYLT…VNAI), 229-249 (VMSG…LGFI), 270-287 (VGAY…GVFG), 290-310 (LLGI…IVSV), 328-348 (IFFT…VISM), 350-370 (VPVL…ILLA), 382-402 (IPIA…NGWV), and 417-437 (LEWF…AKFV).

The protein belongs to the branched chain amino acid transporter family.

Its subcellular location is the cell membrane. Functionally, component of the transport system for branched-chain amino acids (leucine, isoleucine and valine), which is coupled to a proton motive force. In Staphylococcus haemolyticus (strain JCSC1435), this protein is Putative branched-chain amino acid carrier protein SH1502.